Here is a 214-residue protein sequence, read N- to C-terminus: Putative pit accessory protein (214 aa).

The protein belongs to the UPF0111 family.

In terms of biological role, could be involved in orthophosphate transport. The polypeptide is Putative pit accessory protein (Rhizobium meliloti (strain 1021) (Ensifer meliloti)).